Consider the following 60-residue polypeptide: Large ribosomal subunit protein bL32 (60 aa).

The segment at 1-43 is disordered; it reads MAVQQNKKSPSKRGMHRSHDALTNPPLAIEPTTGEIHLRHHIS.

It belongs to the bacterial ribosomal protein bL32 family.

This is Large ribosomal subunit protein bL32 from Nitrosomonas europaea (strain ATCC 19718 / CIP 103999 / KCTC 2705 / NBRC 14298).